Reading from the N-terminus, the 418-residue chain is MDIGDFVKLELENTTYSGTLMPSLNENTIVIKMKSGYNVGLDKKKIKNIEILESGDKPKYGLPPLNLEKNPKLKNISILSTGGTVASRVDYKTGAVHPAFTADDLIRAVPELMDVANIKGKVILNILSENMLPKYWAMTAEAIKEEIENGAEGIVIAHGTDTMHYTASALSFMVTSEVPIILVGAQRSSDRPSSDAALNIIAAVKAATEPIKGVYVLMHGETGDTVCHLHEGTKVRKLHSSRRDAFKSVNKTPIAEVNPVTKEVKYLRDVKSRDKSKIKEVVLNTNLEEKVALIKVYPGIDSEILKFYVDNGYKGIILEGTGLGHTPETFFEGIDYANENNVLVAMTTQTINGRVNMNVYSNGRELQAKGVIPCEDMLSEVAFVKLMHLLGNYEFEEAKELMPKNIAGEINESINLEC.

Residues 74-405 (KNISILSTGG…EEAKELMPKN (332 aa)) form the Asparaginase/glutaminase domain. Catalysis depends on residues T84, T160, D161, and K237.

This sequence belongs to the asparaginase 1 family. GatD subfamily. Heterodimer of GatD and GatE.

The catalysed reaction is L-glutamyl-tRNA(Gln) + L-glutamine + ATP + H2O = L-glutaminyl-tRNA(Gln) + L-glutamate + ADP + phosphate + H(+). In terms of biological role, allows the formation of correctly charged Gln-tRNA(Gln) through the transamidation of misacylated Glu-tRNA(Gln) in organisms which lack glutaminyl-tRNA synthetase. The reaction takes place in the presence of glutamine and ATP through an activated gamma-phospho-Glu-tRNA(Gln). The GatDE system is specific for glutamate and does not act on aspartate. The protein is Glutamyl-tRNA(Gln) amidotransferase subunit D of Methanococcus maripaludis (strain C6 / ATCC BAA-1332).